An 877-amino-acid polypeptide reads, in one-letter code: Translation initiation factor IF-2 (877 aa).

Residues 66–115 (PKKESTAKKTTKKDEVKKEEKKTTTKKESKNPAKAVSEKKDEVKKEEKQP) are compositionally biased toward basic and acidic residues. 3 disordered regions span residues 66–127 (PKKE…LEEK), 187–208 (SDES…SKKE), and 241–290 (ENKP…KESE). Residues 192 to 201 (KRKKKEKKNH) show a composition bias toward basic residues. Residues 245–265 (AQPTNKKQPNILKQSLNNSIN) are compositionally biased toward polar residues. The tr-type G domain maps to 376-543 (QRAPVITIMG…IVLLQADILE (168 aa)). The segment at 385–392 (GHVDHGKT) is G1. 385–392 (GHVDHGKT) lines the GTP pocket. Positions 410–414 (GITQH) are G2. Positions 431–434 (DTPG) are G3. Residues 431–435 (DTPGH) and 485–488 (NKMD) contribute to the GTP site. The tract at residues 485–488 (NKMD) is G4. The segment at 521-523 (SAK) is G5.

Belongs to the TRAFAC class translation factor GTPase superfamily. Classic translation factor GTPase family. IF-2 subfamily.

It localises to the cytoplasm. One of the essential components for the initiation of protein synthesis. Protects formylmethionyl-tRNA from spontaneous hydrolysis and promotes its binding to the 30S ribosomal subunits. Also involved in the hydrolysis of GTP during the formation of the 70S ribosomal complex. This is Translation initiation factor IF-2 from Campylobacter lari (strain RM2100 / D67 / ATCC BAA-1060).